A 218-amino-acid polypeptide reads, in one-letter code: Thiopurine S-methyltransferase (218 aa).

Trp-10, Leu-45, Glu-66, and Arg-123 together coordinate S-adenosyl-L-methionine.

Belongs to the class I-like SAM-binding methyltransferase superfamily. TPMT family.

The protein resides in the cytoplasm. It carries out the reaction S-adenosyl-L-methionine + a thiopurine = S-adenosyl-L-homocysteine + a thiopurine S-methylether.. The polypeptide is Thiopurine S-methyltransferase (Shewanella baltica (strain OS185)).